The primary structure comprises 88 residues: Mini zinc finger protein 3 (88 aa).

The ZF-HD dimerization-type; degenerate zinc finger occupies 26–72 (YVECQKNHAANIGGYAVDGCREFMASGGDDALTCAACGCHRNFHRRE).

As to quaternary structure, homo- and heterodimers. Interacts with ZHD3, ZHD5, ZHD6, ZHD7, ZHD8, ZHD9, ZHD10 and ZHD13. As to expression, mostly expressed in roots, stems and flowers, present in seedlings and leaves, and weakly observed in inflorescence and siliques.

The protein localises to the cytoplasm. Inhibits zinc finger homeodomain (ZHD) transcription factors by interacting with them to prevent both their nuclear localization and their DNA-binding properties. Involved in integrating signals from multiple hormones by regulating the expression of specific genes. Promotes the formation of ectopic shoot meristems on leaf margins. The polypeptide is Mini zinc finger protein 3 (MIF3) (Arabidopsis thaliana (Mouse-ear cress)).